A 600-amino-acid polypeptide reads, in one-letter code: MATELIENKLKLLPEKPGCYLMKDINGTVIYVGKSKNLKNRVRSYFKSKQVGRRAELVREIRDYDIITVSTDKEAFLLEITLIKKYQPYYNVQLKQGTGYPYIEITREHDPQTRLTSVVHKDGGYYFGPYPNVYAAQATLKFIRKVYPLRRCHGYQGRPCLYYHMGQCLGACFKKVPQKEYDEQIKKIKSFLNGDITSVKQDLTTKMEKASENLEFERAAEIRDQLKYIEETVEKQKIISNDNTQRDIFNYYVDKSWISIQIFFLRQAKLLRRETRMFPLTDAADPEDAFTSFIVQFYGQKNRILPKEILIPSGFDDDTLAEVLNVAVRTPQRGQKKSLLDMAKDNAKLKLDDKFRLLELGNRKTKGAQKEIFDALGLPYGHVIESFDHSHIQGADPVSALVVFKDGEPDKTSYRKYKLKGEVEHQNGGDEVRNTREVVRRRYGRLLREHKKMPDLILMDGGQIQVDACEDVLRNELNLNIPVAGMVKDDKHRTNHLLFGDPINGIPLKLIPLDPKSEGFYLMTRIQDEVHRFAITFHRRRHAKNALSSRLDSIKGIGPKSRNKLLRNFGSLKKIKEASIEDLRAAGLTLPQAQTVKLML.

In terms of domain architecture, GIY-YIG spans Glu-15 to Val-92. One can recognise a UVR domain in the interval Thr-197–Thr-232.

This sequence belongs to the UvrC family. In terms of assembly, interacts with UvrB in an incision complex.

It localises to the cytoplasm. In terms of biological role, the UvrABC repair system catalyzes the recognition and processing of DNA lesions. UvrC both incises the 5' and 3' sides of the lesion. The N-terminal half is responsible for the 3' incision and the C-terminal half is responsible for the 5' incision. The protein is UvrABC system protein C of Lactobacillus acidophilus (strain ATCC 700396 / NCK56 / N2 / NCFM).